The chain runs to 228 residues: Max-interacting protein 1 (228 aa).

Disordered stretches follow at residues 29 to 76 (GYAS…NELE) and 161 to 228 (IGST…SFTS). Basic residues predominate over residues 43–56 (QHSKPPRRLSRAQK). Over residues 57–70 (HSSGSSNTSTANRS) the composition is skewed to polar residues. Positions 67–119 (ANRSTHNELEKNRRAHLRLCLERLKVLIPLGPDCTRHTTLGLLNKAKAHIKKL) constitute a bHLH domain. Over residues 173-183 (EREEIEVDVES) the composition is skewed to acidic residues. The segment covering 216–228 (GYSSASVKLSFTS) has biased composition (polar residues).

In terms of assembly, interacts with SMC3. Efficient DNA binding requires dimerization with another bHLH protein. Binds DNA as a heterodimer with MAX. Interacts with RNF17. As to expression, high levels found in the brain, heart and lung while lower levels are seen in the liver, kidney and skeletal muscle.

It is found in the nucleus. Transcriptional repressor. MXI1 binds with MAX to form a sequence-specific DNA-binding protein complex which recognizes the core sequence 5'-CAC[GA]TG-3'. MXI1 thus antagonizes MYC transcriptional activity by competing for MAX. The sequence is that of Max-interacting protein 1 (MXI1) from Homo sapiens (Human).